The sequence spans 143 residues: Histone H2B (143 aa).

Residues 1-52 (MAPKPASTAGKAPASTASKAPVKSDAAKTASKSKVSSGADGEKKKRKKTRKE) form a disordered region. Lys11 carries the post-translational modification N6-acetyllysine; alternate. Residue Lys11 forms a Glycyl lysine isopeptide (Lys-Gly) (interchain with G-Cter in SUMO); alternate linkage. A Phosphoserine modification is found at Ser15. Position 19 is an N6-acetyllysine (Lys19). The segment covering 23–39 (KSDAAKTASKSKVSSGA) has biased composition (low complexity). Residue Lys137 forms a Glycyl lysine isopeptide (Lys-Gly) (interchain with G-Cter in ubiquitin) linkage.

Belongs to the histone H2B family. The nucleosome is a histone octamer containing two molecules each of H2A, H2B, H3 and H4 assembled in one H3-H4 heterotetramer and two H2A-H2B heterodimers. The octamer wraps approximately 147 bp of DNA. In terms of processing, monoubiquitinated to form H2BK123ub1. H2BK123ub1 gives a specific tag for epigenetic transcriptional activation and is also prerequisite for H3K4me and H3K79me formation. H2BK123ub1 also modulates the formation of double-strand breaks during meiosis and is a prerequisite for DNA-damage checkpoint activation. Post-translationally, phosphorylated to form H2BS10ph during progression through meiotic prophase. May be correlated with chromosome condensation. Acetylation of N-terminal lysines and particularly formation of H2BK11ac has a positive effect on transcription. In terms of processing, sumoylation to form H2BK6su occurs preferentially near the telomeres and represses gene transcription.

It localises to the nucleus. It is found in the chromosome. Functionally, core component of nucleosome. Nucleosomes wrap and compact DNA into chromatin, limiting DNA accessibility to the cellular machineries which require DNA as a template. Histones thereby play a central role in transcription regulation, DNA repair, DNA replication and chromosomal stability. DNA accessibility is regulated via a complex set of post-translational modifications of histones, also called histone code, and nucleosome remodeling. In Agaricus bisporus (White button mushroom), this protein is Histone H2B (htbA).